The chain runs to 636 residues: Polyglycine hydrolase (636 aa).

Residues 1 to 22 (MHSLSLRRLLTSVLSLCSCSSA) form the signal peptide. Asn-30 and Asn-151 each carry an N-linked (GlcNAc...) asparagine glycan. An intrachain disulfide couples Cys-141 to Cys-175. Ser-363 is a catalytic residue. N-linked (GlcNAc...) asparagine glycans are attached at residues Asn-383 and Asn-481. Positions 512 to 540 (TEDRIVQESKNTGQDPVHPQSAKLVPGPH) are disordered.

It belongs to the peptidase S12 family.

It localises to the secreted. It catalyses the reaction a glycyl-glycyl-[protein] + H2O = N-terminal glycyl-[protein] + [protein]-C-terminal glycine. In terms of biological role, serine-type endopeptidase that cleaves Gly-Gly bonds in the polyglycine linker of host plant class IV chitinases to disrupt their chitin-binding, and thereby plays a role in lowering the defense responses of the host to the fungus. Degrades Z.mays Endochitinase A (CHIA) in vitro, although corn is not its host species. This chain is Polyglycine hydrolase, found in Fusarium vanettenii (strain ATCC MYA-4622 / CBS 123669 / FGSC 9596 / NRRL 45880 / 77-13-4) (Fusarium solani subsp. pisi).